The sequence spans 400 residues: Phosphoglycerate kinase (400 aa).

Substrate is bound by residues 21–23 (DLN), Arg36, 59–62 (HLGR), Arg114, and Arg147. Residues Lys202, Glu329, and 355–358 (GGDT) each bind ATP.

It belongs to the phosphoglycerate kinase family. In terms of assembly, monomer.

It localises to the cytoplasm. It carries out the reaction (2R)-3-phosphoglycerate + ATP = (2R)-3-phospho-glyceroyl phosphate + ADP. Its pathway is carbohydrate degradation; glycolysis; pyruvate from D-glyceraldehyde 3-phosphate: step 2/5. The chain is Phosphoglycerate kinase from Psychrobacter cryohalolentis (strain ATCC BAA-1226 / DSM 17306 / VKM B-2378 / K5).